The following is a 324-amino-acid chain: HPr kinase/phosphorylase (324 aa).

Catalysis depends on residues H146 and K167. 161-168 (GDSGLGKS) provides a ligand contact to ATP. S168 lines the Mg(2+) pocket. D185 (proton acceptor; for phosphorylation activity. Proton donor; for dephosphorylation activity) is an active-site residue. Residues 209 to 218 (LEVRGLGLLD) are important for the catalytic mechanism of both phosphorylation and dephosphorylation. E210 is a Mg(2+) binding site. Residue R250 is part of the active site. The important for the catalytic mechanism of dephosphorylation stretch occupies residues 271 to 276 (QVAAGR).

Belongs to the HPrK/P family. Homohexamer. The cofactor is Mg(2+).

It carries out the reaction [HPr protein]-L-serine + ATP = [HPr protein]-O-phospho-L-serine + ADP + H(+). It catalyses the reaction [HPr protein]-O-phospho-L-serine + phosphate + H(+) = [HPr protein]-L-serine + diphosphate. Functionally, catalyzes the ATP- as well as the pyrophosphate-dependent phosphorylation of a specific serine residue in HPr, a phosphocarrier protein of the phosphoenolpyruvate-dependent sugar phosphotransferase system (PTS). HprK/P also catalyzes the pyrophosphate-producing, inorganic phosphate-dependent dephosphorylation (phosphorolysis) of seryl-phosphorylated HPr (P-Ser-HPr). The protein is HPr kinase/phosphorylase of Ralstonia pickettii (strain 12J).